Here is a 110-residue protein sequence, read N- to C-terminus: UPF0122 protein lwe1821 (110 aa).

This sequence belongs to the UPF0122 family.

Might take part in the signal recognition particle (SRP) pathway. This is inferred from the conservation of its genetic proximity to ftsY/ffh. May be a regulatory protein. This chain is UPF0122 protein lwe1821, found in Listeria welshimeri serovar 6b (strain ATCC 35897 / DSM 20650 / CCUG 15529 / CIP 8149 / NCTC 11857 / SLCC 5334 / V8).